The sequence spans 361 residues: Phosphoserine aminotransferase (361 aa).

Arg-42 serves as a coordination point for L-glutamate. Pyridoxal 5'-phosphate-binding positions include 76–77 (AT), Trp-102, Thr-152, Asp-172, and Gln-195. Lys-196 bears the N6-(pyridoxal phosphate)lysine mark. 237-238 (NT) contacts pyridoxal 5'-phosphate.

It belongs to the class-V pyridoxal-phosphate-dependent aminotransferase family. SerC subfamily. In terms of assembly, homodimer. Pyridoxal 5'-phosphate serves as cofactor.

It is found in the cytoplasm. The catalysed reaction is O-phospho-L-serine + 2-oxoglutarate = 3-phosphooxypyruvate + L-glutamate. The enzyme catalyses 4-(phosphooxy)-L-threonine + 2-oxoglutarate = (R)-3-hydroxy-2-oxo-4-phosphooxybutanoate + L-glutamate. It functions in the pathway amino-acid biosynthesis; L-serine biosynthesis; L-serine from 3-phospho-D-glycerate: step 2/3. Its pathway is cofactor biosynthesis; pyridoxine 5'-phosphate biosynthesis; pyridoxine 5'-phosphate from D-erythrose 4-phosphate: step 3/5. Its function is as follows. Catalyzes the reversible conversion of 3-phosphohydroxypyruvate to phosphoserine and of 3-hydroxy-2-oxo-4-phosphonooxybutanoate to phosphohydroxythreonine. The sequence is that of Phosphoserine aminotransferase from Xanthomonas euvesicatoria pv. vesicatoria (strain 85-10) (Xanthomonas campestris pv. vesicatoria).